Here is a 580-residue protein sequence, read N- to C-terminus: Glypican-3 (580 aa).

The signal sequence occupies residues 1-24; sequence MAGTVRTACLVVAMLLSLDFPGQA. Gln25 is modified (pyrrolidone carboxylic acid). 7 disulfides stabilise this stretch: Cys35/Cys72, Cys65/Cys262, Cys73/Cys265, Cys197/Cys349, Cys252/Cys285, Cys274/Cys422, and Cys278/Cys410. Residues Asn124 and Asn241 are each glycosylated (N-linked (GlcNAc...) asparagine). Residue Ser352 is modified to Phosphoserine; by FAM20C. A glycan (N-linked (GlcNAc...) asparagine) is linked at Asn418. O-linked (Xyl...) (glycosaminoglycan) serine glycosylation is found at Ser495 and Ser509. Asn554 is lipidated: GPI-anchor amidated asparagine. A propeptide spans 555 to 580 (removed in mature form); that stretch reads LGNVHSPLKLLTSMAISVVCFFFLVH.

Belongs to the glypican family. In terms of assembly, heterodimer; disulfide-linked. Cleavage by a furin-like convertase results in production of alpha and beta chains which form a disulfide-linked heterodimer. Interacts with DPP4. Interacts with FGF2. Interacts with WNT5A. Also interacts with WNT3A and WNT7B. Interacts with hedgehog protein SHH; the heparan sulfate chains are not required for the interaction. Also interacts with hedgehog protein IHH. Interacts with CD81. Interacts with Wnt receptors FZD4, FZD7 and FZD8; the heparan sulfate chains are required for the interaction. In terms of processing, O-glycosylated; contains heparan sulfate and/or chondroitin sulfate. Cleaved intracellularly by a furin-like convertase to generate 2 subunits, alpha and beta, which remain associated through disulfide bonds and are associated with the cell surface via the GPI-anchor. This processing is essential for its role in inhibition of hedgehog signaling. A second proteolytic event may result in cleavage of the protein on the cell surface, separating it from the GPI-anchor and leading to its shedding from the cell surface. As to expression, detected in placenta (at protein level). Highly expressed in lung, liver and kidney.

The protein resides in the cell membrane. Functionally, cell surface proteoglycan. Negatively regulates the hedgehog signaling pathway when attached via the GPI-anchor to the cell surface by competing with the hedgehog receptor PTC1 for binding to hedgehog proteins. Binding to the hedgehog protein SHH triggers internalization of the complex by endocytosis and its subsequent lysosomal degradation. Positively regulates the canonical Wnt signaling pathway by binding to the Wnt receptor Frizzled and stimulating the binding of the Frizzled receptor to Wnt ligands. Positively regulates the non-canonical Wnt signaling pathway. Binds to CD81 which decreases the availability of free CD81 for binding to the transcriptional repressor HHEX, resulting in nuclear translocation of HHEX and transcriptional repression. Inhibits the dipeptidyl peptidase activity of DPP4. Plays a role in limb patterning and skeletal development by controlling the cellular response to BMP4. Modulates the effects of growth factors BMP2, BMP7 and FGF7 on renal branching morphogenesis. Required for coronary vascular development. Plays a role in regulating cell movements during gastrulation. In Homo sapiens (Human), this protein is Glypican-3 (GPC3).